A 387-amino-acid chain; its full sequence is Alpha-sarcoglycan (387 aa).

The first 23 residues, 1–23 (MAETLFWTPLLVVLLAGLGDTEA), serve as a signal peptide directing secretion. The Extracellular segment spans residues 24 to 290 (QQTTLHPLVG…APDRDFLVDA (267 aa)). N-linked (GlcNAc...) asparagine glycans are attached at residues N174 and N246. Residues 291-311 (LVTLLVPLLVALLLTLLLAYV) traverse the membrane as a helical segment. At 312–387 (MCCRREGRLK…AQVPLILDQH (76 aa)) the chain is on the cytoplasmic side. S377 carries the post-translational modification Phosphoserine.

It belongs to the sarcoglycan alpha/epsilon family. As to quaternary structure, interacts with the syntrophin SNTA1. Cross-link to form 2 major subcomplexes: one consisting of SGCB, SGCD and SGCG and the other consisting of SGCB and SGCD. The association between SGCB and SGCG is particularly strong while SGCA is loosely associated with the other sarcoglycans. As to expression, most strongly expressed in skeletal muscle. Also expressed in cardiac muscle and, at much lower levels, in lung. In the fetus, most abundant in cardiac muscle and, at lower levels, in lung. Also detected in liver and kidney. Not expressed in brain.

It localises to the cell membrane. The protein localises to the sarcolemma. It is found in the cytoplasm. The protein resides in the cytoskeleton. Its function is as follows. Component of the sarcoglycan complex, a subcomplex of the dystrophin-glycoprotein complex which forms a link between the F-actin cytoskeleton and the extracellular matrix. In Homo sapiens (Human), this protein is Alpha-sarcoglycan (SGCA).